We begin with the raw amino-acid sequence, 761 residues long: Prolyl endopeptidase FAP (761 aa).

Over 1–4 the chain is Cytoplasmic; the sequence is MKTW. A helical; Signal-anchor for type II membrane protein membrane pass occupies residues 5 to 25; sequence LKTVFGVTTLAALALVVICIV. The Extracellular segment spans residues 26 to 761; the sequence is LRPSRVYKPE…FLKQCFSLSD (736 aa). 3 N-linked (GlcNAc...) asparagine glycosylation sites follow: Asn49, Asn92, and Asn99. Residues Glu203 and Glu204 each contribute to the substrate site. N-linked (GlcNAc...) asparagine glycosylation is found at Asn227 and Asn314. 3 cysteine pairs are disulfide-bonded: Cys321/Cys332, Cys438/Cys441, and Cys448/Cys466. Ser624 functions as the Charge relay system in the catalytic mechanism. An intrachain disulfide couples Cys643 to Cys756. Residue Asn679 is glycosylated (N-linked (GlcNAc...) asparagine). Active-site charge relay system residues include Asp702 and His734.

Belongs to the peptidase S9B family. Homodimer; homodimerization is required for activity of both plasma membrane and soluble forms. The monomer is inactive. Heterodimer with DPP4. Interacts with PLAUR; the interaction occurs at the cell surface of invadopodia membranes. Interacts with ITGB1. Interacts with ITGA3. Associates with integrin alpha-3/beta-1; the association occurs in a collagen-dependent manner at the cell surface of invadopodia membranes. N-glycosylated. In terms of processing, the N-terminus may be blocked. As to expression, expressed strongly in uterus, pancreas, submaxillary gland and skin, less in lymph node, ovary, skeletal muscle, adrenal and bone marrow. Expressed in reactive stromal fibroblast in epithelial cancers. Expressed in melanocytes but not melanomas (at protein level). Detected in fibroblasts, in placenta, uterus, embryos from day 7-19 and in newborn mice (P1).

Its subcellular location is the cell surface. It is found in the cell membrane. The protein resides in the cell projection. The protein localises to the lamellipodium membrane. It localises to the invadopodium membrane. Its subcellular location is the ruffle membrane. It is found in the membrane. The protein resides in the secreted. It catalyses the reaction Hydrolysis of Pro-|-Xaa &gt;&gt; Ala-|-Xaa in oligopeptides.. It carries out the reaction Release of an N-terminal dipeptide, Xaa-Yaa-|-Zaa-, from a polypeptide, preferentially when Yaa is Pro, provided Zaa is neither Pro nor hydroxyproline.. Gelatinase activity is inhibited by serine-protease inhibitors, such as phenylmethylsulfonyl fluoride (PMSF), 4-(2-aminoethyl)-benzenesulfonyl fluoride hydrochloride (AEBSF), 4-amidino phenylsulfonyl fluoride (APSF) and diisopropyl fluorophosphate (DFP), N-ethylmaleimide (NEM) and phenylmethylsulfonyl fluoride (PMSF). Dipeptidyl peptidase activity is inhibited by 2,2'-azino-bis(3-ethylbenzthiazoline-6-sulfonic acid), diisopropylfluorophosphate (DFP). Prolyl endopeptidase activity is inhibited by the boronic acid peptide Ac-Gly-BoroPro, Ac-Gly-Pro-chloromethyl ketone and Thr-Ser-Gly-chloromethyl ketone. In terms of biological role, cell surface glycoprotein serine protease that participates in extracellular matrix degradation and involved in many cellular processes including tissue remodeling, fibrosis, wound healing, inflammation and tumor growth. Both plasma membrane and soluble forms exhibit post-proline cleaving endopeptidase activity, with a marked preference for Ala/Ser-Gly-Pro-Ser/Asn/Ala consensus sequences, on substrate such as alpha-2-antiplasmin SERPINF2 and SPRY2. Degrade also gelatin, heat-denatured type I collagen, but not native collagen type I and IV, vibronectin, tenascin, laminin, fibronectin, fibrin or casein. Also has dipeptidyl peptidase activity, exhibiting the ability to hydrolyze the prolyl bond two residues from the N-terminus of synthetic dipeptide substrates provided that the penultimate residue is proline, with a preference for Ala-Pro, Ile-Pro, Gly-Pro, Arg-Pro and Pro-Pro. Natural neuropeptide hormones for dipeptidyl peptidase are the neuropeptide Y (NPY), peptide YY (PYY), substance P (TAC1) and brain natriuretic peptide 32 (NPPB). The plasma membrane form, in association with either DPP4, PLAUR or integrins, is involved in the pericellular proteolysis of the extracellular matrix (ECM), and hence promotes cell adhesion, migration and invasion through the ECM. Plays a role in tissue remodeling during development and wound healing. Participates in the cell invasiveness towards the ECM in malignant melanoma cancers. Enhances tumor growth progression by increasing angiogenesis, collagen fiber degradation and apoptosis and by reducing antitumor response of the immune system. Promotes glioma cell invasion through the brain parenchyma by degrading the proteoglycan brevican. Acts as a tumor suppressor in melanocytic cells through regulation of cell proliferation and survival in a serine protease activity-independent manner. The protein is Prolyl endopeptidase FAP of Mus musculus (Mouse).